The following is an 88-amino-acid chain: Acyl-CoA-binding protein homolog (88 aa).

In terms of domain architecture, ACB spans 3 to 88; the sequence is PQADFDKAAG…AHELIEKYGL (86 aa). An acyl-CoA is bound by residues Lys-15, 30–34, Lys-52, Lys-56, and Tyr-75; that span reads YGLYK.

This sequence belongs to the ACBP family. As to expression, brain. Is selectively expressed in glial cells.

Its subcellular location is the endoplasmic reticulum. It localises to the golgi apparatus. May play important functions in the control of brain and pituitary activities. May regulate GABA neurotransmission through a paracrine and/or autocrine mechanism. May not bind acyl-CoA esters. In Pelophylax ridibundus (Marsh frog), this protein is Acyl-CoA-binding protein homolog.